A 114-amino-acid polypeptide reads, in one-letter code: Ribonuclease P protein component (114 aa).

This sequence belongs to the RnpA family. As to quaternary structure, consists of a catalytic RNA component (M1 or rnpB) and a protein subunit.

It catalyses the reaction Endonucleolytic cleavage of RNA, removing 5'-extranucleotides from tRNA precursor.. Its function is as follows. RNaseP catalyzes the removal of the 5'-leader sequence from pre-tRNA to produce the mature 5'-terminus. It can also cleave other RNA substrates such as 4.5S RNA. The protein component plays an auxiliary but essential role in vivo by binding to the 5'-leader sequence and broadening the substrate specificity of the ribozyme. This Exiguobacterium sp. (strain ATCC BAA-1283 / AT1b) protein is Ribonuclease P protein component.